Reading from the N-terminus, the 490-residue chain is MNNLESWEAVIGLETHVQLNTKSKIFTSASTAFGDAPNTHIDPVVCGLPGTLPVLNETVLEYAVKTSLALNLNVAEHCKFDRKQYFYPDLPKNYQISQFDEPLAENGWLEVEIIEKDKDPYTKKIGIERLHMEEDAGKLVHSGSDRLAGSKYSLVDYNRAGIALCEIVSKPDIRTGREAAEYASEIRRTVRYLGVSDGNMQEGSLRCDVNISVRKGPNAPFGTKVEIKNMNSFSAIQKACDYEIARQIEVYENGGEIFQETRLWDEAKQLTKSMRLKEGSSDYRYFPDPDLGPIEITKAQKEIWFNELPELPSKKRNKYVNEFGLSAYDARVISDEINMANFFEETVANGAEAKLASNWVTSDIVGYLKANKLSFSELKLSPENLAEMINMILKNTISGKIAKEILPELIKKNISPKKLVEEKGLAMISDSSSILPIINELINEYPNEVQAFRNGKTKLLGFFIGQLMKRTKGKADPKLANKLLAEKLNG.

The protein belongs to the GatB/GatE family. GatB subfamily. In terms of assembly, heterotrimer of A, B and C subunits.

It catalyses the reaction L-glutamyl-tRNA(Gln) + L-glutamine + ATP + H2O = L-glutaminyl-tRNA(Gln) + L-glutamate + ADP + phosphate + H(+). The enzyme catalyses L-aspartyl-tRNA(Asn) + L-glutamine + ATP + H2O = L-asparaginyl-tRNA(Asn) + L-glutamate + ADP + phosphate + 2 H(+). Its function is as follows. Allows the formation of correctly charged Asn-tRNA(Asn) or Gln-tRNA(Gln) through the transamidation of misacylated Asp-tRNA(Asn) or Glu-tRNA(Gln) in organisms which lack either or both of asparaginyl-tRNA or glutaminyl-tRNA synthetases. The reaction takes place in the presence of glutamine and ATP through an activated phospho-Asp-tRNA(Asn) or phospho-Glu-tRNA(Gln). The protein is Aspartyl/glutamyl-tRNA(Asn/Gln) amidotransferase subunit B of Prochlorococcus marinus (strain MIT 9312).